The primary structure comprises 348 residues: Mannonate dehydratase (348 aa).

This sequence belongs to the mannonate dehydratase family. It depends on Fe(2+) as a cofactor. The cofactor is Mn(2+).

The enzyme catalyses D-mannonate = 2-dehydro-3-deoxy-D-gluconate + H2O. The protein operates within carbohydrate metabolism; pentose and glucuronate interconversion. Functionally, catalyzes the dehydration of D-mannonate. This chain is Mannonate dehydratase, found in Streptococcus agalactiae serotype V (strain ATCC BAA-611 / 2603 V/R).